Here is a 699-residue protein sequence, read N- to C-terminus: uncharacterized protein (699 aa).

Disordered stretches follow at residues 175–208 (PTLGVSEFPSKHGDHSDSKTYESPISNSQAASLS), 289–364 (PTAK…EEPD), and 539–603 (RAKE…KEYL). The span at 183-194 (PSKHGDHSDSKT) shows a compositional bias: basic and acidic residues. Positions 195–208 (YESPISNSQAASLS) are enriched in polar residues. Over residues 308-322 (SKHKKRPKRLSKFKQ) the composition is skewed to basic residues. Residues 323–338 (AKLETKKSGNKDHATS) are compositionally biased toward basic and acidic residues. 2 stretches are compositionally biased toward polar residues: residues 339-360 (SEKLSLGNESIHSINETRSSSI) and 548-573 (HSNATCTIKNDDLSNTLNNRAANTKL). Positions 574 to 603 (NPKEEDKSTVESELKAPPKEKSSETSKEYL) are enriched in basic and acidic residues.

It localises to the cytoplasm. This is an uncharacterized protein from Schizosaccharomyces pombe (strain 972 / ATCC 24843) (Fission yeast).